The sequence spans 489 residues: Glutamate--tRNA ligase (489 aa).

A 'HIGH' region motif is present at residues 10-20 (PSPTGFLHIGG). The short motif at 261–265 (KLSKR) is the 'KMSKS' region element. K264 provides a ligand contact to ATP.

The protein belongs to the class-I aminoacyl-tRNA synthetase family. Glutamate--tRNA ligase type 1 subfamily. Monomer.

The protein localises to the cytoplasm. It catalyses the reaction tRNA(Glu) + L-glutamate + ATP = L-glutamyl-tRNA(Glu) + AMP + diphosphate. Catalyzes the attachment of glutamate to tRNA(Glu) in a two-step reaction: glutamate is first activated by ATP to form Glu-AMP and then transferred to the acceptor end of tRNA(Glu). This is Glutamate--tRNA ligase from Finegoldia magna (strain ATCC 29328 / DSM 20472 / WAL 2508) (Peptostreptococcus magnus).